Consider the following 118-residue polypeptide: Large ribosomal subunit protein uL22 (118 aa).

This sequence belongs to the universal ribosomal protein uL22 family. Part of the 50S ribosomal subunit.

This protein binds specifically to 23S rRNA; its binding is stimulated by other ribosomal proteins, e.g. L4, L17, and L20. It is important during the early stages of 50S assembly. It makes multiple contacts with different domains of the 23S rRNA in the assembled 50S subunit and ribosome. Its function is as follows. The globular domain of the protein is located near the polypeptide exit tunnel on the outside of the subunit, while an extended beta-hairpin is found that lines the wall of the exit tunnel in the center of the 70S ribosome. This Pediococcus pentosaceus (strain ATCC 25745 / CCUG 21536 / LMG 10740 / 183-1w) protein is Large ribosomal subunit protein uL22.